We begin with the raw amino-acid sequence, 301 residues long: Ribonuclease H2 subunit A (301 aa).

Met1 carries the N-acetylmethionine modification. The RNase H type-2 domain occupies 28-251; the sequence is PCVLGVDEAG…AQAILEKEAE (224 aa). Residues Asp34, Glu35, and Asp142 each coordinate a divalent metal cation. At Thr217 the chain carries Phosphothreonine. The segment covering 255–264 has biased composition (acidic residues); it reads WEDSEAEEDP. Residues 255-284 are disordered; the sequence is WEDSEAEEDPERPGKITSYFSQGPQTCRPQ. Phosphoserine is present on Ser258. Over residues 272 to 282 the composition is skewed to polar residues; sequence SYFSQGPQTCR.

Belongs to the RNase HII family. Eukaryotic subfamily. The RNase H2 complex is a heterotrimer composed of the catalytic subunit RNASEH2A and the non-catalytic subunits RNASEH2B and RNASEH2C. Mn(2+) serves as cofactor. It depends on Mg(2+) as a cofactor.

Its subcellular location is the nucleus. It catalyses the reaction Endonucleolytic cleavage to 5'-phosphomonoester.. Functionally, catalytic subunit of RNase HII, an endonuclease that specifically degrades the RNA of RNA:DNA hybrids. Participates in DNA replication, possibly by mediating the removal of lagging-strand Okazaki fragment RNA primers during DNA replication. Mediates the excision of single ribonucleotides from DNA:RNA duplexes. The chain is Ribonuclease H2 subunit A (Rnaseh2a) from Mus musculus (Mouse).